The chain runs to 254 residues: Transcription factor CAULIFLOWER (254 aa).

The MADS-box domain occupies M1 to S61. One can recognise a K-box domain in the interval Q90–I180. A compositionally biased stretch (polar residues) spans R182–Q191. Residues R182–L205 form a disordered region.

In terms of assembly, homodimer capable of binding to CArG-box sequences.

The protein resides in the nucleus. Probable transcription factor that promotes early floral meristem identity in synergy with APETALA1, FRUITFULL and LEAFY. Is required subsequently for the transition of an inflorescence meristem into a floral meristem. Seems to be partially redundant to the function of APETALA1. This chain is Transcription factor CAULIFLOWER (CAL), found in Brassica rapa subsp. pekinensis (Chinese cabbage).